Consider the following 360-residue polypeptide: Peptide chain release factor 1 (360 aa).

N5-methylglutamine is present on Q235.

This sequence belongs to the prokaryotic/mitochondrial release factor family. Post-translationally, methylated by PrmC. Methylation increases the termination efficiency of RF1.

It is found in the cytoplasm. Its function is as follows. Peptide chain release factor 1 directs the termination of translation in response to the peptide chain termination codons UAG and UAA. This chain is Peptide chain release factor 1, found in Burkholderia cenocepacia (strain ATCC BAA-245 / DSM 16553 / LMG 16656 / NCTC 13227 / J2315 / CF5610) (Burkholderia cepacia (strain J2315)).